The chain runs to 550 residues: MDAKLREDLFRRYVASLENRLEEGAAEGGGDRQGAKTEEALISTATALLGSYQADPGQRFRMLRFYDVVENSLRTQRGTSLRTVGTAFATLETICTNLLLFPWKKEYRCIKTFTGPYVYQLQSVLCDSDLRSLLRSMGYSREQELQYNVRDHPGGASHLRQLAFELLLAQAECRLLGEVVSMSRGFASELEAVELRRNTREDAAGCADALRRRDSLTGDLSRLSVRPLDIDRAHLRRSGRPSKSVDVTDSAGHWHQASKPVLKASLSLRKEPLFVDTEEDMKDEIIRPSPSLYPVAAPPSYSPVADFFPIQSPPSEPYSYHLSSLDEVDLYTERGLGGHQTPSRPPSREPRDSWVLKGHMMKCQGCGMGCPSLSSCQRCDMILCSSCHAVDPAPCCGFQDYTKTSRPLDGYMPIKEKLSVYSSAHSHTHPHPHPLPHAQSHSLLLDKAVMSSKLFPSKPVGSGPSPVGSLVSSGSSSSGGERLSVGGSRCGFCNKPGASHTCVNCSKVSCDTCMSLYASDLCTRKNPHHNFVPNHQLNFKSSTISHLVYR.

One can recognise a PUB domain in the interval 83 to 156 (TVGTAFATLE…YNVRDHPGGA (74 aa)). A PIM motif motif is present at residues 320–337 (YHLSSLDEVDLYTERGLG). The interval 457-480 (SKPVGSGPSPVGSLVSSGSSSSGG) is disordered.

Belongs to the SPATA2 family.

The protein localises to the cytoplasm. It is found in the nucleus. Bridging factor that mediates the recruitment of cyld to the LUBAC complex, thereby regulating TNF-alpha-induced necroptosis. Required to activate the 'Met-1'- (linear) and 'Lys-63'-linked deubiquitinase activities of cyld. The chain is Spermatogenesis-associated protein 2 from Danio rerio (Zebrafish).